The chain runs to 370 residues: Queuine tRNA-ribosyltransferase (370 aa).

Asp-89 functions as the Proton acceptor in the catalytic mechanism. Residues 89 to 93 (DSGGF), Asp-143, Gln-185, and Gly-212 contribute to the substrate site. The RNA binding stretch occupies residues 243–249 (GVGKPED). Residue Asp-262 is the Nucleophile of the active site. The segment at 267–271 (TRNAR) is RNA binding; important for wobble base 34 recognition. Zn(2+)-binding residues include Cys-300, Cys-302, Cys-305, and His-331.

It belongs to the queuine tRNA-ribosyltransferase family. As to quaternary structure, homodimer. Within each dimer, one monomer is responsible for RNA recognition and catalysis, while the other monomer binds to the replacement base PreQ1. Requires Zn(2+) as cofactor.

The catalysed reaction is 7-aminomethyl-7-carbaguanine + guanosine(34) in tRNA = 7-aminomethyl-7-carbaguanosine(34) in tRNA + guanine. It functions in the pathway tRNA modification; tRNA-queuosine biosynthesis. Catalyzes the base-exchange of a guanine (G) residue with the queuine precursor 7-aminomethyl-7-deazaguanine (PreQ1) at position 34 (anticodon wobble position) in tRNAs with GU(N) anticodons (tRNA-Asp, -Asn, -His and -Tyr). Catalysis occurs through a double-displacement mechanism. The nucleophile active site attacks the C1' of nucleotide 34 to detach the guanine base from the RNA, forming a covalent enzyme-RNA intermediate. The proton acceptor active site deprotonates the incoming PreQ1, allowing a nucleophilic attack on the C1' of the ribose to form the product. After dissociation, two additional enzymatic reactions on the tRNA convert PreQ1 to queuine (Q), resulting in the hypermodified nucleoside queuosine (7-(((4,5-cis-dihydroxy-2-cyclopenten-1-yl)amino)methyl)-7-deazaguanosine). The protein is Queuine tRNA-ribosyltransferase of Pseudoalteromonas atlantica (strain T6c / ATCC BAA-1087).